Reading from the N-terminus, the 445-residue chain is Disintegrin and metalloproteinase domain-containing protein 18 (445 aa).

Residues 1 to 106 (IYRKHLKYIG…LDMQCLGDLS (106 aa)) enclose the Peptidase M12B domain. Topologically, residues 1 to 409 (IYRKHLKYIG…TKRLSQHADS (409 aa)) are extracellular. 3 cysteine pairs are disulfide-bonded: C18/C101, C60/C85, and C62/C67. Residues N19 and N59 are each glycosylated (N-linked (GlcNAc...) asparagine). Residues N84 and N131 are each glycosylated (N-linked (GlcNAc...) asparagine). One can recognise a Disintegrin domain in the interval 113–202 (QSVCGNGIVE…HCVPDTFALD (90 aa)). A disulfide bridge connects residues C173 and C194. N-linked (GlcNAc...) asparagine glycans are attached at residues N333 and N340. The EGF-like domain maps to 342–376 (TGNDCNAAKKCKGNGICNNFGHCQCFPDYRPPDCN). 3 cysteine pairs are disulfide-bonded: C346-C358, C352-C364, and C366-C375. Residues 410-430 (WVILGFFIFLPFIMTLFLGII) traverse the membrane as a helical segment. At 431 to 445 (KRNERKIVPQKEQER) the chain is on the cytoplasmic side.

In terms of processing, the prodomain and the metalloprotease-like domain are cleaved during the epididymal maturation of the spermatozoa. Expressed specifically in testis.

It is found in the membrane. Functionally, sperm surface membrane protein that may be involved in spermatogenesis and fertilization. This is a non catalytic metalloprotease-like protein. This Rattus norvegicus (Rat) protein is Disintegrin and metalloproteinase domain-containing protein 18 (Adam18).